Here is a 293-residue protein sequence, read N- to C-terminus: Pyridoxal 5'-phosphate synthase subunit PdxS (293 aa).

Aspartate 23 lines the D-ribose 5-phosphate pocket. Lysine 80 (schiff-base intermediate with D-ribose 5-phosphate) is an active-site residue. A D-ribose 5-phosphate-binding site is contributed by glycine 152. Residue arginine 164 participates in D-glyceraldehyde 3-phosphate binding. Residues glycine 213 and 234-235 (GS) contribute to the D-ribose 5-phosphate site.

It belongs to the PdxS/SNZ family. In the presence of PdxT, forms a dodecamer of heterodimers.

It carries out the reaction aldehydo-D-ribose 5-phosphate + D-glyceraldehyde 3-phosphate + L-glutamine = pyridoxal 5'-phosphate + L-glutamate + phosphate + 3 H2O + H(+). It functions in the pathway cofactor biosynthesis; pyridoxal 5'-phosphate biosynthesis. Its function is as follows. Catalyzes the formation of pyridoxal 5'-phosphate from ribose 5-phosphate (RBP), glyceraldehyde 3-phosphate (G3P) and ammonia. The ammonia is provided by the PdxT subunit. Can also use ribulose 5-phosphate and dihydroxyacetone phosphate as substrates, resulting from enzyme-catalyzed isomerization of RBP and G3P, respectively. This chain is Pyridoxal 5'-phosphate synthase subunit PdxS, found in Thermus thermophilus (strain ATCC 27634 / DSM 579 / HB8).